Here is a 187-residue protein sequence, read N- to C-terminus: MKRLWVTGYRSYELGVFSDKDPKLTVIKYALSNYLKSLLEEGKIDWVISGANLGTEQWGLETAISLQNDYSVHTALMTPYLEFSKEWNDSNQMKYQNLTEQVDFTASTSDYPYMRPVQLKNYQNFMLEHTDRALLLYDPEHPGKTKYDYEAIKKYQEKSDYPLDIIDFYDLQEAAEEYEENHRKNFY.

The protein belongs to the UPF0398 family.

The polypeptide is UPF0398 protein LJ_1195 (Lactobacillus johnsonii (strain CNCM I-12250 / La1 / NCC 533)).